A 105-amino-acid polypeptide reads, in one-letter code: U2-lycotoxin-Ls1c (105 aa).

Positions 1 to 17 (MIKYVLISALLVVAVYS) are cleaved as a signal peptide. Residues 18-41 (FTIEDSEDALLEEAEDELDTEEER) constitute a propeptide that is removed on maturation. Cystine bridges form between Cys51/Cys67, Cys58/Cys97, Cys60/Cys83, and Cys69/Cys81.

It belongs to the neurotoxin 04 (omega-agtx) family. 01 (type I omega-agtx) subfamily. Expressed by the venom gland.

The protein resides in the secreted. In terms of biological role, insecticidal to house crickets. It induces an excitatory slow-onset impact that leads to irreversible spastic paralysis. It also modifies human voltage-gated potassium channel Kv1.5/KCNA5. Most likely, it binds to the voltage-sensing domain of the channel, suggesting it does not block the pore but prevents its opening at physiological membrane potentials. The recombinant peptide binds to the channel in an irreversible manner and slows down the hKv1.5 current activation kinetics. It is not toxic to mice, when intracranially injected (at 0.5 ug/g mouse). The protein is U2-lycotoxin-Ls1c of Lycosa singoriensis (Wolf spider).